The sequence spans 401 residues: Phosphoglycerate kinase (401 aa).

Substrate-binding positions include 24-26 (DFN), arginine 40, 63-66 (HFGR), arginine 122, and arginine 155. Residues lysine 206, glycine 297, glutamate 328, and 357-360 (GGDS) contribute to the ATP site.

This sequence belongs to the phosphoglycerate kinase family. In terms of assembly, monomer.

It localises to the cytoplasm. The enzyme catalyses (2R)-3-phosphoglycerate + ATP = (2R)-3-phospho-glyceroyl phosphate + ADP. The protein operates within carbohydrate degradation; glycolysis; pyruvate from D-glyceraldehyde 3-phosphate: step 2/5. The chain is Phosphoglycerate kinase from Prochlorococcus marinus (strain NATL2A).